The following is a 347-amino-acid chain: D-alanine--D-alanine ligase (347 aa).

Positions 131–333 constitute an ATP-grasp domain; it reads KRVLESAGIA…YPELIERLVD (203 aa). 161 to 216 serves as a coordination point for ATP; the sequence is EEKLAYPVFTKPSNMGSSVGISKSENQEELRPALELAFRYDSRVLVEQGVNAREIE. Residues D287, E300, and N302 each coordinate Mg(2+).

Belongs to the D-alanine--D-alanine ligase family. The cofactor is Mg(2+). Mn(2+) is required as a cofactor.

It is found in the cytoplasm. It carries out the reaction 2 D-alanine + ATP = D-alanyl-D-alanine + ADP + phosphate + H(+). Its pathway is cell wall biogenesis; peptidoglycan biosynthesis. Functionally, cell wall formation. The polypeptide is D-alanine--D-alanine ligase (Streptococcus pneumoniae (strain Taiwan19F-14)).